Consider the following 239-residue polypeptide: Ribosomal RNA small subunit methyltransferase G (239 aa).

S-adenosyl-L-methionine contacts are provided by residues glycine 79, phenylalanine 84, 130-131 (AE), and arginine 149.

This sequence belongs to the methyltransferase superfamily. RNA methyltransferase RsmG family.

Its subcellular location is the cytoplasm. Specifically methylates the N7 position of a guanine in 16S rRNA. The polypeptide is Ribosomal RNA small subunit methyltransferase G (Lactobacillus delbrueckii subsp. bulgaricus (strain ATCC BAA-365 / Lb-18)).